Consider the following 441-residue polypeptide: MKVTFSLMQKASKQIDKFALYVPKSGVFPKGFKVATQATGVKKNGNLDLGIIRNVNTSRPSSAAAVFTTNKFKAAPVLVSKEVLEVTGGENVDAIVVNSGCANAVTGEVGLKDAREIAGVANQNLGKQNATLVMSTGVIGQRLSMDKIVPALSQQFETNAFKDDFESWLNLARAISTTDTFPKLISSNFKLANGTEYTLTGIAKGAGMICPNMATLLGFIVTDLPITPSALQKMLRSATDRSFNCISVDGDMSTNDTISMLANGAVDTAVIDENSQDFVQVQTQVTEFAQRLAQLVVRDGEGSTKFVTVNVKNALNFKDAKIIAESISNSMLVKTALYGQDANWGRILCAIGYAKLDNLQSLDDKKINVSFVATDNSEPKELKLIVDGVPQLDIDEARASELLAQQDLEVLVDLGTGSEECQFWTCDLTHEYVTINGDYRS.

6 residues coordinate substrate: Thr177, Lys204, Thr215, Glu301, Asn436, and Ser441. Thr215 functions as the Nucleophile in the catalytic mechanism.

It belongs to the ArgJ family. As to quaternary structure, heterodimer of an alpha and a beta chain. In terms of processing, the alpha and beta chains are autoproteolytically processed from a single precursor protein within the mitochondrion.

Its subcellular location is the mitochondrion matrix. The enzyme catalyses N(2)-acetyl-L-ornithine + L-glutamate = N-acetyl-L-glutamate + L-ornithine. The catalysed reaction is L-glutamate + acetyl-CoA = N-acetyl-L-glutamate + CoA + H(+). The protein operates within amino-acid biosynthesis; L-arginine biosynthesis; L-ornithine and N-acetyl-L-glutamate from L-glutamate and N(2)-acetyl-L-ornithine (cyclic): step 1/1. Its pathway is amino-acid biosynthesis; L-arginine biosynthesis; N(2)-acetyl-L-ornithine from L-glutamate: step 1/4. In terms of biological role, catalyzes two activities which are involved in the cyclic version of arginine biosynthesis: the synthesis of acetylglutamate from glutamate and acetyl-CoA, and of ornithine by transacetylation between acetylornithine and glutamate. The polypeptide is Arginine biosynthesis bifunctional protein ArgJ, mitochondrial (Kluyveromyces lactis (strain ATCC 8585 / CBS 2359 / DSM 70799 / NBRC 1267 / NRRL Y-1140 / WM37) (Yeast)).